The sequence spans 148 residues: Small ribosomal subunit protein eS6 (148 aa).

This sequence belongs to the eukaryotic ribosomal protein eS6 family.

The chain is Small ribosomal subunit protein eS6 from Pyrobaculum aerophilum (strain ATCC 51768 / DSM 7523 / JCM 9630 / CIP 104966 / NBRC 100827 / IM2).